The primary structure comprises 161 residues: Ecotin (161 aa).

The N-terminal stretch at 1–23 (MGNFTVRATAGLMLASLSTLAHA) is a signal peptide. A disulfide bridge links cysteine 69 with cysteine 106.

This sequence belongs to the protease inhibitor I11 (ecotin) family. Homodimer.

It is found in the periplasm. Its function is as follows. General inhibitor of family S1 serine proteases. The polypeptide is Ecotin (Pseudomonas fluorescens (strain Pf0-1)).